Here is a 409-residue protein sequence, read N- to C-terminus: ATPase ASNA1 homolog (409 aa).

Position 21–28 (21–28 (KGGVGKTT)) interacts with ATP. Asp-62 is an active-site residue. Glu-303 and Asn-330 together coordinate ATP. Residues Cys-342 and Cys-345 each coordinate Zn(2+).

The protein belongs to the arsA ATPase family. Homodimer.

It is found in the cytoplasm. It localises to the endoplasmic reticulum. ATPase required for the post-translational delivery of tail-anchored (TA) proteins to the endoplasmic reticulum. Recognizes and selectively binds the transmembrane domain of TA proteins in the cytosol. This complex then targets to the endoplasmic reticulum by membrane-bound receptors, where the tail-anchored protein is released for insertion. This process is regulated by ATP binding and hydrolysis. ATP binding drives the homodimer towards the closed dimer state, facilitating recognition of newly synthesized TA membrane proteins. ATP hydrolysis is required for insertion. Subsequently, the homodimer reverts towards the open dimer state, lowering its affinity for the membrane-bound receptor, and returning it to the cytosol to initiate a new round of targeting. This chain is ATPase ASNA1 homolog, found in Leishmania infantum.